The chain runs to 172 residues: Small ribosomal subunit protein uS5 (172 aa).

Positions 15–78 (LNDKLIFINR…ANAKRNLSRI (64 aa)) constitute an S5 DRBM domain.

Belongs to the universal ribosomal protein uS5 family. As to quaternary structure, part of the 30S ribosomal subunit. Contacts proteins S4 and S8.

Its function is as follows. With S4 and S12 plays an important role in translational accuracy. In terms of biological role, located at the back of the 30S subunit body where it stabilizes the conformation of the head with respect to the body. The protein is Small ribosomal subunit protein uS5 of Dehalococcoides mccartyi (strain ATCC BAA-2266 / KCTC 15142 / 195) (Dehalococcoides ethenogenes (strain 195)).